A 346-amino-acid polypeptide reads, in one-letter code: Fusaric acid resistance protein FusC (346 aa).

Helical transmembrane passes span 10 to 30 (VIIG…RYTG), 248 to 268 (VILA…VMLV), 291 to 311 (MGMG…GIYP), and 315 to 335 (GFVL…YMSL).

The protein belongs to the aromatic acid exporter ArAE (TC 2.A.85) family.

The protein resides in the cell membrane. In terms of biological role, involved in the resistance (detoxification) of the fungal toxin fusaric acid. In Burkholderia cepacia (Pseudomonas cepacia), this protein is Fusaric acid resistance protein FusC (fusC).